We begin with the raw amino-acid sequence, 260 residues long: Tropinone reductase 2 (260 aa).

Residue 13 to 37 (LVTGGSRGIGYGIVEELANLGASVY) participates in NADP(+) binding. S146 contacts substrate. Residue Y159 is the Proton acceptor of the active site.

It belongs to the short-chain dehydrogenases/reductases (SDR) family.

It carries out the reaction pseudotropine + NADP(+) = tropinone + NADPH + H(+). The protein operates within alkaloid biosynthesis; tropane alkaloid biosynthesis. Catalyzes the stereospecific reduction of tropinone to pseudotropine. This is Tropinone reductase 2 (TR2) from Hyoscyamus niger (Black henbane).